The sequence spans 268 residues: Phosphatidylglycerol--prolipoprotein diacylglyceryl transferase (268 aa).

3 consecutive transmembrane segments (helical) span residues 16 to 36, 56 to 76, and 92 to 112; these read FITLRWYGLLIAVAVFIGIWL, IWLVVAAIPAARLYYVAFNWG, and GIAIHGAILGGIVAMAIFTYV. Arg136 contacts a 1,2-diacyl-sn-glycero-3-phospho-(1'-sn-glycerol). The next 3 helical transmembrane spans lie at 175-195, 204-224, and 236-256; these read PTFLYESLWNVGVFLLLLWLF, GTLLMVYAIAYSLGRFWIEGL, and IAQVVSLVAIALGSWGLFRLY.

The protein belongs to the Lgt family.

It is found in the cell inner membrane. The enzyme catalyses L-cysteinyl-[prolipoprotein] + a 1,2-diacyl-sn-glycero-3-phospho-(1'-sn-glycerol) = an S-1,2-diacyl-sn-glyceryl-L-cysteinyl-[prolipoprotein] + sn-glycerol 1-phosphate + H(+). The protein operates within protein modification; lipoprotein biosynthesis (diacylglyceryl transfer). Catalyzes the transfer of the diacylglyceryl group from phosphatidylglycerol to the sulfhydryl group of the N-terminal cysteine of a prolipoprotein, the first step in the formation of mature lipoproteins. This chain is Phosphatidylglycerol--prolipoprotein diacylglyceryl transferase, found in Thermosynechococcus vestitus (strain NIES-2133 / IAM M-273 / BP-1).